A 708-amino-acid chain; its full sequence is ATP-dependent RNA helicase laf-1 (708 aa).

Over residues 1-21 (MESNQSNNGGSGNAALNRGGR) the composition is skewed to low complexity. A disordered region spans residues 1-191 (MESNQSNNGG…RGTSKWENRG (191 aa)). Over residues 48 to 70 (GAGGGGYRRGGGNSGGGGGGGYD) the composition is skewed to gly residues. 2 stretches are compositionally biased toward basic and acidic residues: residues 72–83 (GYNDNRDDRDNR) and 90–99 (GRDRNYEDRG). The segment covering 100-123 (YNGGGGGGGNRGYNNNRGGGGGGY) has biased composition (gly residues). The Q motif motif lies at 231-259 (SLFSDLSLHEWIEENIKTAGYDRPTPVQK). In terms of domain architecture, Helicase ATP-binding spans 262-453 (IPALQGGRDL…QDFLKENYVF (192 aa)). Residue 275-282 (AQTGSGKT) coordinates ATP. The DEAD box signature appears at 397-400 (DEAD). The region spanning 465–626 (NIMQKIVWVE…ELPDWLEGMS (162 aa)) is the Helicase C-terminal domain. The segment at 623–708 (EGMSGDMRSG…RAQPQQDWWS (86 aa)) is disordered. Composition is skewed to gly residues over residues 630–647 (RSGG…GQRF) and 656–692 (GGSG…GGGR). Over residues 699–708 (RAQPQQDWWS) the composition is skewed to polar residues.

The protein belongs to the DEAD box helicase family. DDX3/DED1 subfamily. In terms of assembly, binds RNA as a monomer at low laf-1 concentrations and as a dimer at high laf-1 concentrations. Expressed in the germline and soma of young adult hermaphrodites.

It localises to the cytoplasm. The protein localises to the cytoplasmic granule. Its subcellular location is the nucleus. It is found in the stress granule. The protein resides in the inflammasome. It localises to the cell membrane. The protein localises to the cell projection. Its subcellular location is the lamellipodium. It catalyses the reaction ATP + H2O = ADP + phosphate + H(+). Multifunctional ATP-dependent RNA helicase. Plays a role in RNA remodeling, but is not required for RNA unwinding. Binds to RNA in a concentration-dependent manner to stimulate annealing between two complementary strands of RNA. This process is also dependent upon ATP; ATP reduces binding to RNA and subsequently diminishes RNA annealing. Involved in many cellular processes, which do not necessarily require its ATPase/helicase catalytic activities. Involved in the regulation of transcription and translation initiation. Involved in innate immunity. Involved in both stress and inflammatory responses. Promotes liquid-liquid phase separation of P granules, which is a process important for intracellular organization and stress granule assembly. Required for embryonic development. Plays a role in sexual cell fate determination by negatively regulating the translation of the sex determining protein tra-2. May play a protective role in the response to heat and oxidative stress. May negatively regulate extrinsic apoptotic signaling pathway via death domain receptors. May be involved in mitotic chromosome segregation. The protein is ATP-dependent RNA helicase laf-1 of Caenorhabditis elegans.